The sequence spans 75 residues: Conotoxin Vc6.15 (75 aa).

The first 19 residues, methionine 1–alanine 19, serve as a signal peptide directing secretion. The propeptide occupies leucine 20–glutamate 41. 3 cysteine pairs are disulfide-bonded: cysteine 49/cysteine 62, cysteine 55/cysteine 66, and cysteine 61/cysteine 71.

Belongs to the conotoxin O2 superfamily. In terms of tissue distribution, expressed by the venom duct.

It localises to the secreted. Inhibits voltage-gated ion channels. The chain is Conotoxin Vc6.15 from Conus victoriae (Queen Victoria cone).